Reading from the N-terminus, the 4543-residue chain is Low-density lipoprotein receptor-related protein 1 (4543 aa).

An N-terminal signal peptide occupies residues 1–21; it reads MGPLLALAGCLLALLAAPAAR. Topologically, residues 22-4419 are extracellular; it reads ALEAPKTCSP…EFIVGEQQSG (4398 aa). 2 LDL-receptor class A domains span residues 27 to 68 and 72 to 112; these read KTCS…ICPQ and SRCQ…HCRE. Disulfide bonds link Cys-29-Cys-42, Cys-36-Cys-55, Cys-49-Cys-66, Cys-74-Cys-87, Cys-81-Cys-100, and Cys-94-Cys-110. Residues 113–151 enclose the EGF-like 1 domain; that stretch reads QLANCTALGCQHHCVPTLSGPACYCNNSFQLAEDRRSCK. A glycan (N-linked (GlcNAc...) asparagine) is linked at Asn-116. 6 disulfides stabilise this stretch: Cys-117–Cys-126, Cys-122–Cys-135, Cys-137–Cys-150, Cys-156–Cys-166, Cys-162–Cys-175, and Cys-177–Cys-190. N-linked (GlcNAc...) asparagine glycosylation occurs at Asn-138. In terms of domain architecture, EGF-like 2; calcium-binding spans 152-191; it reads DFDECTVYGTCSQTCTNTEGSYTCSCVEGYLLQPDNRSCK. Residues Asn-187 and Asn-276 are each glycosylated (N-linked (GlcNAc...) asparagine). LDL-receptor class B repeat units lie at residues 294 to 336, 337 to 380, and 381 to 424; these read GNFY…DPAM, GKVF…DLVS, and RLVY…FENY. Residue Asn-359 is glycosylated (N-linked (GlcNAc...) asparagine). An N-linked (GlcNAc...) asparagine glycan is attached at Asn-448. In terms of domain architecture, EGF-like 3 spans 476–522; that stretch reads RSHACEPDQFGKPGGCSDICLLGNSHKSRTCRCRSGFSLGSDGKSCK. Cystine bridges form between Cys-480/Cys-495, Cys-491/Cys-506, and Cys-508/Cys-521. LDL-receptor class B repeat units lie at residues 573-615, 616-661, 662-712, and 713-756; these read GFIY…DWMG, NNLY…DPLN, GWMY…DIPA, and KILY…YSSF. Asn-731 carries an N-linked (GlcNAc...) asparagine glycan. The 41-residue stretch at 801–841 folds into the EGF-like 4 domain; that stretch reads GSNKCRVNNGGCSSLCLATPRGRQCACAEDQILGADSVTCE. 33 cysteine pairs are disulfide-bonded: Cys-805–Cys-816, Cys-812–Cys-825, Cys-827–Cys-840, Cys-852–Cys-864, Cys-859–Cys-877, Cys-871–Cys-888, Cys-893–Cys-905, Cys-900–Cys-918, Cys-912–Cys-929, Cys-934–Cys-946, Cys-941–Cys-959, Cys-953–Cys-969, Cys-974–Cys-987, Cys-982–Cys-1000, Cys-994–Cys-1009, Cys-1013–Cys-1025, Cys-1020–Cys-1038, Cys-1032–Cys-1049, Cys-1060–Cys-1073, Cys-1067–Cys-1086, Cys-1080–Cys-1095, Cys-1102–Cys-1116, Cys-1110–Cys-1129, Cys-1123–Cys-1138, Cys-1143–Cys-1157, Cys-1150–Cys-1170, Cys-1164–Cys-1180, Cys-1183–Cys-1194, Cys-1190–Cys-1204, Cys-1206–Cys-1219, Cys-1225–Cys-1235, Cys-1231–Cys-1244, and Cys-1246–Cys-1259. LDL-receptor class A domains lie at 850–890, 891–931, 932–971, 972–1011, 1011–1051, 1058–1097, 1100–1140, and 1141–1180; these read PQCQ…LCHQ, HTCP…TCSA, RTCSPNQFSCASGRCIPISWTCDLDDDCGDRSDESASCAY, PTCFPLTQFTCNNGRCININWRCDNDNDCGDNSDEAGCSH, HSCS…NCTN, GGCHTDEFQCRLDGLCIPMRWRCDGDTDCMDSSDEKNCEG, HVCD…NCES, and LVCKPPSHTCANNTSICLPPEKLCDGSDDCGDGSDEGELC. Residues Trp-869, Asp-872, Asp-874, Asp-876, Asp-882, and Glu-883 each contribute to the Ca(2+) site. N-linked (GlcNAc...) asparagine glycosylation occurs at Asn-926. Ca(2+)-binding residues include Trp-1030, Asp-1033, Asp-1035, Asp-1037, Asp-1043, and Glu-1044. Asn-1048 carries an N-linked (GlcNAc...) asparagine glycan. Positions 1078, 1081, 1083, 1085, 1091, and 1092 each coordinate Ca(2+). Asn-1152 and Asn-1153 each carry an N-linked (GlcNAc...) asparagine glycan. EGF-like domains lie at 1181 to 1220 and 1221 to 1260; these read DQCSLNNGGCSHNCTVAPGEGIVCSCPLGMELGADNKTCQ and IQSYCAKHLKCSQKCEQDKYNVKCSCYEGWMLEPDGESCR. N-linked (GlcNAc...) asparagine glycans are attached at residues Asn-1193 and Asn-1216. Asn-1305 carries an N-linked (GlcNAc...) asparagine glycan. LDL-receptor class B repeat units follow at residues 1307 to 1353, 1354 to 1396, 1397 to 1443, 1444 to 1488, and 1489 to 1529; these read SSLY…DWIA, GNIY…DPRY, GILF…DYLE, KRIL…YGGE, and VYWT…YHPS. N-linked (GlcNAc...) asparagine glycosylation occurs at Asn-1509. Residues 1534 to 1577 enclose the EGF-like 7 domain; sequence APNPCEANGGKGPCSHLCLINYNRTLSCACPHLMKLDKDNTTCY. 3 disulfides stabilise this stretch: Cys-1538-Cys-1551, Cys-1547-Cys-1561, and Cys-1563-Cys-1576. N-linked (GlcNAc...) asparagine glycosylation is found at Asn-1556, Asn-1573, Asn-1614, and Asn-1643. LDL-receptor class B repeat units lie at residues 1625 to 1667, 1668 to 1711, 1712 to 1751, and 1752 to 1796; these read QRIY…DWVS, RNLF…HPLH, GKLYWTDGDNISVANMDGSNRTLLFTNQRGPVGLAIDYPE, and SKLY…MGDK. Residues Asn-1721, Asn-1731, Asn-1761, and Asn-1823 are each glycosylated (N-linked (GlcNAc...) asparagine). In terms of domain architecture, EGF-like 8 spans 1842–1883; the sequence is GSNPCSVNNGDCSQLCLPTSETSRSCMCTAGYSLKSGQQSCE. Intrachain disulfides connect Cys-1846-Cys-1857, Cys-1853-Cys-1867, and Cys-1869-Cys-1882. N-linked (GlcNAc...) asparagine glycosylation occurs at Asn-1929. LDL-receptor class B repeat units follow at residues 1930–1972, 1973–2015, 2016–2059, and 2060–2103; these read DTIY…DWIA, GNIY…HPEK, GYLF…DYED, and GKLY…FEDY. N-linked (GlcNAc...) asparagine glycosylation is found at Asn-1991 and Asn-2044. N-linked (GlcNAc...) asparagine glycosylation is found at Asn-2113 and Asn-2123. In terms of domain architecture, EGF-like 9 spans 2151-2191; sequence GTNVCAQNNGGCQQLCLFRGGGRRTCACAHGMLSEDGVSCR. 3 disulfides stabilise this stretch: Cys-2155–Cys-2166, Cys-2162–Cys-2176, and Cys-2178–Cys-2190. 5 LDL-receptor class B repeats span residues 2247–2288, 2289–2337, 2338–2382, 2383–2425, and 2426–2467; these read NRIF…HRGW, DTLY…DECQ, NLMF…DHRA, EKIY…YGDY, and IFWT…VAND. A glycan (N-linked (GlcNAc...) asparagine) is linked at Asn-2466. The EGF-like 10 domain occupies 2472–2512; that stretch reads ELSPCRVNNGGCQDLCLLTPKGHVNCSCRGERVLQEDFTCK. Intrachain disulfides connect Cys-2476/Cys-2487, Cys-2483/Cys-2497, and Cys-2499/Cys-2511. A glycan (N-linked (GlcNAc...) asparagine) is linked at Asn-2496. N-linked (GlcNAc...) asparagine glycosylation occurs at Asn-2515. 7 consecutive LDL-receptor class A domains span residues 2516–2557, 2558–2596, 2597–2635, 2636–2684, 2688–2730, 2730–2769, and 2770–2812; these read STCN…YCSS, RKCKKGFLHCMNGRCVASRFWCNGVDDCGDNSDEVPCNK, TSCAATEFRCRDGSCIGNSSRCNQFIDCEDASDEMNCTA, TDCS…NCPG, PKCP…RQDK, KFCYPVQFECNNHRCISKLWVCDGADDCGDGSDEDSRCRL, and TTCS…GCLY. Cystine bridges form between Cys-2518/Cys-2531, Cys-2526/Cys-2544, Cys-2538/Cys-2555, Cys-2560/Cys-2572, Cys-2567/Cys-2585, and Cys-2579/Cys-2594. N-linked (GlcNAc...) asparagine glycosylation occurs at Asn-2595. Disulfide bonds link Cys-2599/Cys-2611, Cys-2606/Cys-2624, Cys-2618/Cys-2633, Cys-2638/Cys-2660, Cys-2654/Cys-2673, Cys-2667/Cys-2682, Cys-2690/Cys-2702, Cys-2697/Cys-2715, Cys-2709/Cys-2724, Cys-2732/Cys-2744, Cys-2739/Cys-2757, Cys-2751/Cys-2767, Cys-2772/Cys-2785, Cys-2779/Cys-2798, and Cys-2792/Cys-2810. N-linked (GlcNAc...) asparagine glycans are attached at residues Asn-2614 and Asn-2632. Asn-2813 carries N-linked (GlcNAc...) asparagine glycosylation. LDL-receptor class A domains are found at residues 2814–2853, 2854–2897, and 2900–2938; these read NTCDEREFMCGNRQCIPKHFVCDHDDDCGDGSDESPECEY, PTCG…RCSS, and SKCNDSFFMCKNGKCIPEALLCDNNNDCADGSDELNCFI. Intrachain disulfides connect Cys-2816–Cys-2828, Cys-2823–Cys-2841, Cys-2835–Cys-2851, Cys-2856–Cys-2868, Cys-2863–Cys-2882, Cys-2876–Cys-2895, Cys-2902–Cys-2914, Cys-2909–Cys-2927, Cys-2921–Cys-2936, Cys-2941–Cys-2953, Cys-2949–Cys-2962, Cys-2964–Cys-2977, Cys-2983–Cys-2993, Cys-2989–Cys-3002, and Cys-3004–Cys-3018. N-linked (GlcNAc...) asparagine glycosylation is present at Asn-2903. The EGF-like 11 domain occupies 2939 to 2978; it reads NECLNKKLSGCSQECEDLKIGYKCRCRPGFRLKDDGKTCI. Residues 2979 to 3019 enclose the EGF-like 12; calcium-binding domain; the sequence is DIDECSTTYPCSQKCINTLGSYKCLCIEGYKLKPDNPTSCK. N-linked (GlcNAc...) asparagine glycosylation is found at Asn-3045 and Asn-3086. 5 LDL-receptor class B repeats span residues 3066–3110, 3111–3153, 3154–3197, 3198–3240, and 3241–3281; these read QMIY…DWVG, GNLY…DVQN, GYLY…DYIN, SRIY…FEDY, and IYWT…YHPY. Asn-3176 carries an N-linked (GlcNAc...) asparagine glycan. Asn-3261 is a glycosylation site (N-linked (GlcNAc...) asparagine). In terms of domain architecture, EGF-like 13 spans 3287-3328; it reads PNHPCKTNNAGCSNLCLLSPGGGHKCACPTNFYLGSDGKTCV. 3 cysteine pairs are disulfide-bonded: Cys-3291–Cys-3302, Cys-3298–Cys-3312, and Cys-3314–Cys-3327. 11 consecutive LDL-receptor class A domains span residues 3329–3368, 3369–3407, 3408–3447, 3448–3488, 3489–3530, 3531–3569, 3570–3608, 3608–3646, 3649–3689, 3690–3730, and 3736–3776; these read SNCTASQFVCKNDKCIPFWWKCDTEDDCGDRSDEPEDCPE, FKCRPGQFQCSTGICTNPAFICDGDNDCQDNSDEANCDI, HVCLPSQFKCTNTNRCIPGIFRCNGQDNCGDGEDEKDCPE, VTCA…NCTQ, MTCG…ECDE, RTCEPYQFRCKNNRCVPGRWQCDYDNDCGDNSDEESCTP, RPCSESEFSCANGRCIAGRWKCDGDHDCADGSDEKDCIP, PRCEFDQYQCKNGHCIPMRWRCDADADCMDGTDEEDCGT, RTCP…ECLK, FQCP…DCES, and KSCS…SCSH. Asn-3330 carries an N-linked (GlcNAc...) asparagine glycan. 38 disulfides stabilise this stretch: Cys-3331/Cys-3343, Cys-3338/Cys-3356, Cys-3350/Cys-3366, Cys-3371/Cys-3383, Cys-3378/Cys-3396, Cys-3390/Cys-3405, Cys-3410/Cys-3423, Cys-3417/Cys-3436, Cys-3430/Cys-3445, Cys-3450/Cys-3463, Cys-3457/Cys-3476, Cys-3470/Cys-3486, Cys-3491/Cys-3504, Cys-3498/Cys-3517, Cys-3511/Cys-3528, Cys-3533/Cys-3545, Cys-3540/Cys-3558, Cys-3552/Cys-3567, Cys-3572/Cys-3584, Cys-3579/Cys-3597, Cys-3591/Cys-3606, Cys-3610/Cys-3622, Cys-3617/Cys-3635, Cys-3629/Cys-3644, Cys-3658/Cys-3676, Cys-3670/Cys-3687, Cys-3692/Cys-3706, Cys-3700/Cys-3719, Cys-3713/Cys-3728, Cys-3738/Cys-3752, Cys-3747/Cys-3765, Cys-3759/Cys-3774, Cys-3783/Cys-3796, Cys-3790/Cys-3805, Cys-3807/Cys-3820, Cys-3826/Cys-3836, Cys-3832/Cys-3845, and Cys-3847/Cys-3858. Asn-3485 is a glycosylation site (N-linked (GlcNAc...) asparagine). The N-linked (GlcNAc...) asparagine glycan is linked to Asn-3659. EGF-like domains follow at residues 3779–3821 and 3822–3859; these read KSYD…NSCQ and DVNECLRFGTCSQLCNNTKGSHVCSCAKNFMKTDNMCK. Residue Asn-3786 is glycosylated (N-linked (GlcNAc...) asparagine). Asn-3837 is a glycosylation site (N-linked (GlcNAc...) asparagine). LDL-receptor class B repeat units lie at residues 3910-3952, 3969-4011, 4012-4055, and 4056-4100; these read NKIY…THLN, GNIY…DPLR, GTMY…DYHN, and ERLY…FEDY. Residues 3939-3942 carry the Recognition site for proteolytical processing motif; sequence RNRR. A glycan (N-linked (GlcNAc...) asparagine) is linked at Asn-3952. 2 N-linked (GlcNAc...) asparagine glycosylation sites follow: Asn-4074 and Asn-4124. EGF-like domains follow at residues 4146–4182, 4195–4231, 4231–4267, 4267–4303, 4303–4339, 4339–4374, and 4372–4409; these read VTNPCDRKKCEWLCLLSPSGPVCTCPNGKRLDNGTCV, TTDTCDLVCLNGGSCFLNARKQAKCRCQPRYNGERCQ, QINQCSDYCQNGGLCTASPSGMPTCRCPTGFTGSRCD, DQQVCTNYCHNNGSCTVNQGNQPNCRCPPTFIGDRCQ, QYQQCFNYCENNGVCQMSRDGVKQCRCPPQFEGAQCQ, QDNKCSRCQEGKCNINRQSGDVSCICPDGKIAPSCL, and SCLTCDSYCLNGGTCSISDKTQLPECLCPLEVTGMRCE. Disulfide bonds link Cys-4150/Cys-4159, Cys-4155/Cys-4168, Cys-4170/Cys-4181, Cys-4199/Cys-4209, Cys-4203/Cys-4219, Cys-4221/Cys-4230, Cys-4235/Cys-4245, Cys-4239/Cys-4255, Cys-4257/Cys-4266, Cys-4271/Cys-4281, Cys-4275/Cys-4291, Cys-4293/Cys-4302, Cys-4307/Cys-4317, Cys-4311/Cys-4327, Cys-4329/Cys-4338, Cys-4343/Cys-4351, Cys-4346/Cys-4362, Cys-4364/Cys-4373, Cys-4376/Cys-4386, Cys-4380/Cys-4397, and Cys-4399/Cys-4408. Residue Asn-4178 is glycosylated (N-linked (GlcNAc...) asparagine). An N-linked (GlcNAc...) asparagine glycan is attached at Asn-4278. A helical membrane pass occupies residues 4420–4443; that stretch reads RTASIVIPILLLLLLLAVVAFAWY. Residues 4444–4543 lie on the Cytoplasmic side of the membrane; it reads KWRIKGAKGF…ADDDLTDPLA (100 aa). The NPXY motif motif lies at 4501–4506; it reads FTNPVY. Positions 4522–4543 are disordered; that stretch reads STDEKRELLARGADDDLTDPLA. A compositionally biased stretch (basic and acidic residues) spans 4523 to 4535; that stretch reads TDEKRELLARGAD.

Belongs to the LDLR family. In terms of assembly, binds vitellogenin and LRPAP1 (alpha 2-macroglobulin). In terms of processing, cleaved into a 85 kDa membrane-spanning subunit (LRP-85) and a 515 kDa large extracellular domain (LRP-515) that remains non-covalently associated. As to expression, somatic.

Its subcellular location is the membrane. It is found in the coated pit. Functionally, endocytic receptor involved in endocytosis and in phagocytosis of apoptotic cells. Involved in cellular lipid homeostasis. Involved in the plasma clearance of chylomicron remnants and activated LRPAP1 (alpha 2-macroglobulin), as well as the local metabolism of complexes between plasminogen activators and their endogenous inhibitors. Acts as an alpha-2-macroglobulin receptor. The sequence is that of Low-density lipoprotein receptor-related protein 1 (LRP1) from Gallus gallus (Chicken).